The following is a 491-amino-acid chain: Malonate-semialdehyde dehydrogenase 1 (491 aa).

NAD(+)-binding residues include Ala154, Phe156, Lys180, Glu183, Arg184, Ser233, and Thr255. Residue Cys288 is the Nucleophile of the active site. Glu386 serves as a coordination point for NAD(+).

The protein belongs to the aldehyde dehydrogenase family. IolA subfamily. As to quaternary structure, homotetramer.

It catalyses the reaction 3-oxopropanoate + NAD(+) + CoA + H2O = hydrogencarbonate + acetyl-CoA + NADH + H(+). The enzyme catalyses 2-methyl-3-oxopropanoate + NAD(+) + CoA + H2O = propanoyl-CoA + hydrogencarbonate + NADH + H(+). The protein operates within polyol metabolism; myo-inositol degradation into acetyl-CoA; acetyl-CoA from myo-inositol: step 7/7. Catalyzes the oxidation of malonate semialdehyde (MSA) and methylmalonate semialdehyde (MMSA) into acetyl-CoA and propanoyl-CoA, respectively. Is involved in a myo-inositol catabolic pathway. Bicarbonate, and not CO2, is the end-product of the enzymatic reaction. This chain is Malonate-semialdehyde dehydrogenase 1, found in Shouchella clausii (strain KSM-K16) (Alkalihalobacillus clausii).